The sequence spans 285 residues: Pantothenate synthetase (285 aa).

Met-30–His-37 is an ATP binding site. Residue His-37 is the Proton donor of the active site. (R)-pantoate is bound at residue Gln-61. Gln-61 serves as a coordination point for beta-alanine. ATP is bound at residue Gly-149–Asp-152. Gln-155 is a (R)-pantoate binding site. ATP-binding positions include Ile-178 and Phe-186–Arg-189.

It belongs to the pantothenate synthetase family. In terms of assembly, homodimer.

The protein resides in the cytoplasm. The enzyme catalyses (R)-pantoate + beta-alanine + ATP = (R)-pantothenate + AMP + diphosphate + H(+). It functions in the pathway cofactor biosynthesis; (R)-pantothenate biosynthesis; (R)-pantothenate from (R)-pantoate and beta-alanine: step 1/1. Its function is as follows. Catalyzes the condensation of pantoate with beta-alanine in an ATP-dependent reaction via a pantoyl-adenylate intermediate. The polypeptide is Pantothenate synthetase (Buchnera aphidicola subsp. Schizaphis graminum (strain Sg)).